We begin with the raw amino-acid sequence, 196 residues long: GTP cyclohydrolase 1 (196 aa).

The Zn(2+) site is built by cysteine 86, histidine 89, and cysteine 157.

It belongs to the GTP cyclohydrolase I family. In terms of assembly, toroid-shaped homodecamer, composed of two pentamers of five dimers.

It catalyses the reaction GTP + H2O = 7,8-dihydroneopterin 3'-triphosphate + formate + H(+). It participates in cofactor biosynthesis; 7,8-dihydroneopterin triphosphate biosynthesis; 7,8-dihydroneopterin triphosphate from GTP: step 1/1. This Parabacteroides distasonis (strain ATCC 8503 / DSM 20701 / CIP 104284 / JCM 5825 / NCTC 11152) protein is GTP cyclohydrolase 1.